The sequence spans 173 residues: Putative metal-dependent hydrolase BCG9842_B2589 (173 aa).

The Zn(2+) site is built by His65, His156, and His160.

The protein belongs to the metal hydrolase YfiT family. Homodimer. Zn(2+) serves as cofactor.

It is found in the cytoplasm. Possible metal-dependent hydrolase. The sequence is that of Putative metal-dependent hydrolase BCG9842_B2589 from Bacillus cereus (strain G9842).